Consider the following 129-residue polypeptide: Small ribosomal subunit protein uS11 (129 aa).

This sequence belongs to the universal ribosomal protein uS11 family. In terms of assembly, part of the 30S ribosomal subunit. Interacts with proteins S7 and S18. Binds to IF-3.

Its function is as follows. Located on the platform of the 30S subunit, it bridges several disparate RNA helices of the 16S rRNA. Forms part of the Shine-Dalgarno cleft in the 70S ribosome. This Lawsonia intracellularis (strain PHE/MN1-00) protein is Small ribosomal subunit protein uS11.